The chain runs to 952 residues: Leucine--tRNA ligase (952 aa).

The short motif at 65–76 (PYPSGAGLHVGH) is the 'HIGH' region element. The 'KMSKS' region signature appears at 727 to 731 (KMGKS). Lys730 contacts ATP.

Belongs to the class-I aminoacyl-tRNA synthetase family.

It localises to the cytoplasm. It carries out the reaction tRNA(Leu) + L-leucine + ATP = L-leucyl-tRNA(Leu) + AMP + diphosphate. The polypeptide is Leucine--tRNA ligase (Salinispora arenicola (strain CNS-205)).